We begin with the raw amino-acid sequence, 403 residues long: Calcium-responsive transactivator (403 aa).

The N-terminal auto-inhibitory domain stretch occupies residues 1 to 148; that stretch reads MSVAFASARP…TLPTTTMSMA (148 aa). The SH2-binding motif lies at 50 to 53; the sequence is YQQI. Disordered regions lie at residues 72-111, 152-171, 224-303, and 318-403; these read QSLLPAPPTQNMNLGPGGMSQTGPSQTLHSQGNLSEALGS, HGSAPGYSHTVPSSQNVPMQ, NQSS…RTFE, and SQQQ…NYQQ. Polar residues-rich tracts occupy residues 92–105 and 161–171; these read QTGPSQTLHSQGNL and TVPSSQNVPMQ. Residues 149–238 form a methionine-rich intra-molecular domain region; the sequence is VSTHGSAPGY…GSSMMGQRPL (90 aa). The span at 224–235 shows a compositional bias: low complexity; the sequence is NQSSQGSSMMGQ. The tract at residues 252 to 324 is MFD domain; the sequence is YLGQEEYYSE…AQYSQQQTGY (73 aa). Residues 263 to 277 show a composition bias toward polar residues; it reads YGHSQGSSEAMTPQY. Low complexity predominate over residues 286–296; the sequence is YSYQQSSYGEQ. The necessary for nuclear localization stretch occupies residues 341–403; it reads NQQNYPGQQQ…EQGQYGNYQQ (63 aa). The short motif at 360 to 363 is the SH2-binding element; sequence SQYS. Positions 378 to 386 match the SH3-binding motif; the sequence is TSQTTSTAQ. An SH2-binding motif is present at residues 398–401; the sequence is YGNY.

It belongs to the SS18 family. Homodimer.

Its subcellular location is the nucleus. Transcriptional activator which may be required for calcium-dependent dendritic growth and branching in cortical neurons. The polypeptide is Calcium-responsive transactivator (ss18l1) (Xenopus laevis (African clawed frog)).